Here is a 337-residue protein sequence, read N- to C-terminus: Dimethyladenosine transferase 1, mitochondrial (337 aa).

A mitochondrion-targeting transit peptide spans methionine 1–arginine 84. S-adenosyl-L-methionine contacts are provided by residues glutamine 38–leucine 41, asparagine 39, leucine 41, glycine 67, glutamate 89, aspartate 118, and asparagine 140.

This sequence belongs to the class I-like SAM-binding methyltransferase superfamily. rRNA adenine N(6)-methyltransferase family. KsgA subfamily.

The protein resides in the mitochondrion. In terms of biological role, probable S-adenosyl-L-methionine-dependent methyltransferase which specifically dimethylates mitochondrial 12S rRNA at the conserved stem loop. This Drosophila pseudoobscura pseudoobscura (Fruit fly) protein is Dimethyladenosine transferase 1, mitochondrial (mtTFB1).